Consider the following 473-residue polypeptide: MHDNIFLPDAFLAQVQETMPSHLSMDEFVAACKRPLRRSIRVNTLKNSVEEFKKRAEEKQWQLDPVPWCDTGFWITRQESDTVKLGSTAEHMAGLFYIQEASSMMPVTALLKDNDNIEMALDMASAPGSKTTQLAAGMKNKGALVANEYSSSRVKILCSNVQRCGVSNVALTHFDGRVFGGWLPETFDSILLDAPCSGEGTIRKDPDAMHNWSPESVIEIGDTQRDLIKSAFHALKPGGVMVYSTCTLNHEENQNICHHLVTEFGDAVTFEPLGDLFENAEKALTKEGFLHIYPQIFDSEGFFVAKIRKNSATIAPEVKKRLGKFPFALANQKEIKAIEDELHNTLQLSIPETNELWIRDKEVWAFPKRMSSLIGEMRYHRIGFKLAETHKKGYRWQHEAIMAIAKADNPTSSELTIEQAREWYMGRDVRPDNVGKGETIVTFNGAVIGLGKWVGNRIKNGLPRELVRDGNLF.

Residues 124–130 (ASAPGSK), Glu148, Asp175, and Asp193 contribute to the S-adenosyl-L-methionine site. Cys246 (nucleophile) is an active-site residue.

This sequence belongs to the class I-like SAM-binding methyltransferase superfamily. RsmB/NOP family.

It is found in the cytoplasm. It carries out the reaction cytidine(1407) in 16S rRNA + S-adenosyl-L-methionine = 5-methylcytidine(1407) in 16S rRNA + S-adenosyl-L-homocysteine + H(+). Functionally, specifically methylates the cytosine at position 1407 (m5C1407) of 16S rRNA. This is Ribosomal RNA small subunit methyltransferase F from Aliivibrio salmonicida (strain LFI1238) (Vibrio salmonicida (strain LFI1238)).